Here is a 914-residue protein sequence, read N- to C-terminus: Solute carrier family 12 member 9 (914 aa).

The Cytoplasmic portion of the chain corresponds to 1–36 (MASESSPLLAYRLLGEEGAAFPPNGAGVSGVPSSRK). Phosphoserine is present on S6. The chain crosses the membrane as a helical span at residues 37-57 (LSTFLGVVVPTVLSMFSIVVF). Topologically, residues 58–72 (LRIGFVVGHAGLLQA) are extracellular. The helical transmembrane segment at 73 to 93 (LAMLLVAYIILALTVLSVCAI) threads the bilayer. Residues 94–119 (ATNGAVRGGGAYFMISRTLGPEVGGS) are Cytoplasmic-facing. The helical transmembrane segment at 120 to 140 (IGLMFYLANVCGCAVSLLGLV) threads the bilayer. Residues 141-167 (ESILDVFGADATGSSGIQVLPQGYGWN) are Extracellular-facing. A helical transmembrane segment spans residues 168–188 (LLYGSLLLGLVGGVCTLGAGL). Residues 189-193 (YARAS) are Cytoplasmic-facing. Residues 194 to 214 (FLTFLLVSGSLASVLVSFVAV) traverse the membrane as a helical segment. The Extracellular segment spans residues 215–262 (GPRNIPLAPRPGTNASSVPHRHGHFTGFNGSTLRDNLGAGYAEDYTTG). N-linked (GlcNAc...) asparagine glycosylation is found at N228 and N243. A helical membrane pass occupies residues 263–283 (AMMTFASVFAVLFNGCTGIMA). Topologically, residues 284 to 297 (GANMSGELKDPSRA) are cytoplasmic. The helical transmembrane segment at 298 to 318 (IPLGTIIAVAYTFFIYILLFF) threads the bilayer. Topologically, residues 319–338 (LSSFTCDRALLQEDYGFFRD) are extracellular. The chain crosses the membrane as a helical span at residues 339–359 (ISLWPPLVLIGIYATALSASM). Residues 360–376 (SSLIGASRILHALAQDD) lie on the Cytoplasmic side of the membrane. A helical transmembrane segment spans residues 377 to 399 (LFGVILAPAKVVSGGGNPWGAVL). At 400–416 (YSWGLVQLVLLAGKLNT) the chain is on the extracellular side. Residues 417–437 (LAAVVTVFYLVAYAAVDLSCL) traverse the membrane as a helical segment. The Cytoplasmic segment spans residues 438–466 (SLEWASAPNFRPTFSLFSWHTCLLGVASC). The chain crosses the membrane as a helical span at residues 467 to 487 (LLMMFLISPGAAGGSLLLMGL). Topologically, residues 488–740 (LSALLTARGG…LLRPRGGPGY (253 aa)) are extracellular. The tract at residues 645–678 (PAFSEPAEGTREGGSPALSTLFPPPRAPGSPRAL) is disordered. Residues 741-761 (VDVCGLFLLQMATILSMVPAW) traverse the membrane as a helical segment. Over 762 to 914 (HSARLRIFLC…GVTPVTCTDL (153 aa)) the chain is Cytoplasmic. The segment at 844-864 (QGRGTVGGPGGPEGRDGEEGP) is disordered.

The protein belongs to the SLC12A transporter family. As to quaternary structure, interacts with SLC12A1.

It localises to the cell membrane. It is found in the lysosome membrane. In terms of biological role, may be an inhibitor of SLC12A1. Seems to correspond to a subunit of a multimeric transport system and thus, additional subunits may be required for its function. May play a role in lysosomal ion flux and osmoregulation. This Mus musculus (Mouse) protein is Solute carrier family 12 member 9 (Slc12a9).